Consider the following 317-residue polypeptide: Acetyl-coenzyme A carboxylase carboxyl transferase subunit alpha (317 aa).

A CoA carboxyltransferase C-terminal domain is found at 39 to 293 (KLEGKAQEAL…GNAIAEAMGS (255 aa)).

The protein belongs to the AccA family. As to quaternary structure, acetyl-CoA carboxylase is a heterohexamer composed of biotin carboxyl carrier protein (AccB), biotin carboxylase (AccC) and two subunits each of ACCase subunit alpha (AccA) and ACCase subunit beta (AccD).

It localises to the cytoplasm. It catalyses the reaction N(6)-carboxybiotinyl-L-lysyl-[protein] + acetyl-CoA = N(6)-biotinyl-L-lysyl-[protein] + malonyl-CoA. It functions in the pathway lipid metabolism; malonyl-CoA biosynthesis; malonyl-CoA from acetyl-CoA: step 1/1. Its function is as follows. Component of the acetyl coenzyme A carboxylase (ACC) complex. First, biotin carboxylase catalyzes the carboxylation of biotin on its carrier protein (BCCP) and then the CO(2) group is transferred by the carboxyltransferase to acetyl-CoA to form malonyl-CoA. In Azorhizobium caulinodans (strain ATCC 43989 / DSM 5975 / JCM 20966 / LMG 6465 / NBRC 14845 / NCIMB 13405 / ORS 571), this protein is Acetyl-coenzyme A carboxylase carboxyl transferase subunit alpha.